A 334-amino-acid polypeptide reads, in one-letter code: Aspartate carbamoyltransferase catalytic subunit (334 aa).

Positions 71 and 72 each coordinate carbamoyl phosphate. K99 is a binding site for L-aspartate. The carbamoyl phosphate site is built by R121, H151, and Q154. 2 residues coordinate L-aspartate: R184 and R239. The carbamoyl phosphate site is built by G280 and P281.

The protein belongs to the aspartate/ornithine carbamoyltransferase superfamily. ATCase family. As to quaternary structure, heterododecamer (2C3:3R2) of six catalytic PyrB chains organized as two trimers (C3), and six regulatory PyrI chains organized as three dimers (R2).

The enzyme catalyses carbamoyl phosphate + L-aspartate = N-carbamoyl-L-aspartate + phosphate + H(+). Its pathway is pyrimidine metabolism; UMP biosynthesis via de novo pathway; (S)-dihydroorotate from bicarbonate: step 2/3. In terms of biological role, catalyzes the condensation of carbamoyl phosphate and aspartate to form carbamoyl aspartate and inorganic phosphate, the committed step in the de novo pyrimidine nucleotide biosynthesis pathway. The chain is Aspartate carbamoyltransferase catalytic subunit from Pseudomonas putida (strain ATCC 47054 / DSM 6125 / CFBP 8728 / NCIMB 11950 / KT2440).